The sequence spans 551 residues: Solute carrier family 22 member 6 (551 aa).

The Cytoplasmic segment spans residues 1–23 (MAFNDLLKQVGGVGRFQRIQVTL). The chain crosses the membrane as a helical span at residues 24–44 (VVLPLLLMASHNTLQNFTAAI). The Extracellular portion of the chain corresponds to 45–135 (PPHHCRPPAH…LVCSHRALRQ (91 aa)). N-linked (GlcNAc...) asparagine glycosylation is found at Asn56, Asn92, and Asn113. Residues 136-156 (LGQSLYMAGVLIGAMVFGYLA) form a helical membrane-spanning segment. At 157–164 (DRLGRRKV) the chain is on the cytoplasmic side. A helical transmembrane segment spans residues 165–187 (LILNYLQTAVSGTCAAFSPNFTV). Over 188–195 (YCTFRLLS) the chain is Extracellular. A helical membrane pass occupies residues 196-216 (GMSLAGIALNCMTLNVEWMPI). Residues 217–224 (HTRAYVGT) lie on the Cytoplasmic side of the membrane. A helical membrane pass occupies residues 225–245 (LAGYVYSTGQFLLAGVAYAVP). At 246 to 248 (HWR) the chain is on the extracellular side. Residues 249-269 (YLQLLVSVPFFAFFVYSWFFI) form a helical membrane-spanning segment. The Cytoplasmic portion of the chain corresponds to 270–337 (ESARWYSTPG…ELLRCPALRH (68 aa)). A helical transmembrane segment spans residues 338–358 (LFLCLSLLWFATSFAYYGLVM). Residues 359-368 (DLQGFGVSIY) lie on the Extracellular side of the membrane. Residues 369 to 389 (LIQVIFGAVDLPAKLVCFLVI) form a helical membrane-spanning segment. Residues 390-395 (NSLGRR) are Cytoplasmic-facing. Residues 396–416 (PAQMASLLLAGICILVNGVIP) form a helical membrane-spanning segment. Over 417 to 425 (RDQSIVRTS) the chain is Extracellular. Residues 426–446 (LAVLGKGCLASSFNCIFLYTG) form a helical membrane-spanning segment. The Cytoplasmic segment spans residues 447–484 (ELYPTMIRQTGLGMGSTMARVGSIVSPLVSMTSELYPS). The helical transmembrane segment at 485 to 505 (LPLFIYGAVPVAASAATALLP) threads the bilayer. Over 506-551 (ETLGQPLPDTVQDLESRRRGKPRRQQQEQQKQMVPLQASVQEKNGL) the chain is Extracellular. The tract at residues 520-551 (ESRRRGKPRRQQQEQQKQMVPLQASVQEKNGL) is disordered.

The protein belongs to the major facilitator (TC 2.A.1) superfamily. Organic cation transporter (TC 2.A.1.19) family. In terms of processing, glycosylated. Glycosylation is necessary for proper targeting of the transporter to the plasma membrane.

It is found in the basolateral cell membrane. It localises to the basal cell membrane. It carries out the reaction (6R)-L-erythro-5,6,7,8-tetrahydrobiopterin(out) + a dicarboxylate(in) = (6R)-L-erythro-5,6,7,8-tetrahydrobiopterin(in) + a dicarboxylate(out). The enzyme catalyses L-erythro-7,8-dihydrobiopterin(out) + a dicarboxylate(in) = L-erythro-7,8-dihydrobiopterin(in) + a dicarboxylate(out). The catalysed reaction is L-sepiapterin(out) + a dicarboxylate(in) = L-sepiapterin(in) + a dicarboxylate(out). It catalyses the reaction prostaglandin F2alpha(out) + a dicarboxylate(in) = prostaglandin F2alpha(in) + a dicarboxylate(out). It carries out the reaction prostaglandin E2(out) + a dicarboxylate(in) = prostaglandin E2(in) + a dicarboxylate(out). The enzyme catalyses 3',5'-cyclic AMP(out) + a dicarboxylate(in) = 3',5'-cyclic AMP(in) + a dicarboxylate(out). The catalysed reaction is 3',5'-cyclic GMP(out) + a dicarboxylate(in) = 3',5'-cyclic GMP(in) + a dicarboxylate(out). It catalyses the reaction urate(out) + a dicarboxylate(in) = urate(in) + a dicarboxylate(out). It carries out the reaction kynurenate(out) + glutarate(in) = kynurenate(in) + glutarate(out). The enzyme catalyses (indol-3-yl)acetate(out) + a dicarboxylate(in) = (indol-3-yl)acetate(in) + a dicarboxylate(out). The catalysed reaction is indoxyl sulfate(out) + a dicarboxylate(in) = indoxyl sulfate(in) + a dicarboxylate(out). It catalyses the reaction N-benzoylglycine(out) + a dicarboxylate(in) = N-benzoylglycine(in) + a dicarboxylate(out). It carries out the reaction 3-carboxy-4-methyl-5-propyl-2-furanpropanoate(out) + a dicarboxylate(in) = 3-carboxy-4-methyl-5-propyl-2-furanpropanoate(in) + a dicarboxylate(out). Its function is as follows. Secondary active transporter that functions as a Na(+)-independent organic anion (OA)/dicarboxylate antiporter where the uptake of one molecule of OA into the cell is coupled with an efflux of one molecule of intracellular dicarboxylate such as 2-oxoglutarate or glutarate. Mediates the uptake of OA across the basolateral side of proximal tubule epithelial cells, thereby contributing to the renal elimination of endogenous OA from the systemic circulation into the urine. Functions as a biopterin transporters involved in the uptake and the secretion of coenzymes tetrahydrobiopterin (BH4), dihydrobiopterin (BH2) and sepiapterin to urine, thereby determining baseline levels of blood biopterins. Transports prostaglandin E2 (PGE2) and prostaglandin F2-alpha (PGF2-alpha) and may contribute to their renal excretion. Also mediates the uptake of cyclic nucleotides such as cAMP and cGMP. Involved in the transport of neuroactive tryptophan metabolites kynurenate (KYNA) and xanthurenate (XA) and may contribute to their secretion from the brain. May transport glutamate. Also involved in the disposition of uremic toxins and potentially toxic xenobiotics by the renal organic anion secretory pathway, helping reduce their undesired toxicological effects on the body. Uremic toxins include the indoxyl sulfate (IS), hippurate/N-benzoylglycine (HA), indole acetate (IA), 3-carboxy-4- methyl-5-propyl-2-furanpropionate (CMPF) and urate. Xenobiotics include the mycotoxin ochratoxin (OTA). May also contribute to the transport of organic compounds in testes across the blood-testis-barrier. May also work as a bidirectional OA/dicarboxylate exchanger. The chain is Solute carrier family 22 member 6 from Oryctolagus cuniculus (Rabbit).